The sequence spans 406 residues: HEAT repeat-containing taxis protein OE_2401F (406 aa).

HEAT repeat units lie at residues 7-41 (LERSGDVEKLVELLQESEKETVRRRAAEILGNLDE), 42-78 (PEPEGIQALVDAMSDDDESVRAAAIDALTQQEAVDAL), 90-127 (GATWAQAEAFVENLESETPELRMAAANVLGLLGVEDTA), 153-184 (IEQPAVTGILVDCLHGEPLKVRREAAESLGRL), 185-215 (TTEQALDGLLSVVEDDSEAMRRTAVSSLGRF), 216-252 (ETAEPVDALVERLGDESDLVRRAAVFSLIEILSNVPP), and 370-406 (VGGDRSRQRLERLVDETDSEEVRRRAFSAISKLGGKT).

As to quaternary structure, interacts with chemotaxis (Che) proteins.

Functionally, involved in taxis signal transduction. Essential for the ability to control the direction of flagellar rotation. May have a role between CheY and the flagellum. This is HEAT repeat-containing taxis protein OE_2401F from Halobacterium salinarum (strain ATCC 29341 / DSM 671 / R1).